The chain runs to 208 residues: Protein-L-isoaspartate O-methyltransferase (208 aa).

The active site involves serine 59.

This sequence belongs to the methyltransferase superfamily. L-isoaspartyl/D-aspartyl protein methyltransferase family.

The protein localises to the cytoplasm. It catalyses the reaction [protein]-L-isoaspartate + S-adenosyl-L-methionine = [protein]-L-isoaspartate alpha-methyl ester + S-adenosyl-L-homocysteine. In terms of biological role, catalyzes the methyl esterification of L-isoaspartyl residues in peptides and proteins that result from spontaneous decomposition of normal L-aspartyl and L-asparaginyl residues. It plays a role in the repair and/or degradation of damaged proteins. The polypeptide is Protein-L-isoaspartate O-methyltransferase (Cronobacter sakazakii (strain ATCC BAA-894) (Enterobacter sakazakii)).